Consider the following 619-residue polypeptide: CLPTM1-like membrane protein cnrB (619 aa).

The interval 1 to 21 is disordered; sequence MNNQGGAVAANGQRPQAQQQQ. Residues 9 to 21 are compositionally biased toward low complexity; it reads AANGQRPQAQQQQ. 6 helical membrane passes run 26 to 46, 324 to 344, 360 to 380, 384 to 404, 445 to 465, and 474 to 496; these read IMGIISTLIRFMAIYYIASFA, WILGLTLIVSVLHTIFEFLAF, LSVKTITLNCVCMGIIFLYLL, TSYMILASSGFGFLVEFWKLG, YLSWLLFPLVIGTSIYSLYYH, and VVSSLVRTVYTFEFIMMTPQLFI. The disordered stretch occupies residues 566–619; sequence SEEAEEVQQQDKKEIKEKVEEREEEKQEEEEEEKEKEEESTSSSKVTKRKTKKV. A compositionally biased stretch (basic and acidic residues) spans 574-590; it reads QQDKKEIKEKVEEREEE. Over residues 591-605 the composition is skewed to acidic residues; the sequence is KQEEEEEEKEKEEES.

The protein belongs to the CLPTM1 family.

Its subcellular location is the membrane. The sequence is that of CLPTM1-like membrane protein cnrB (cnrB) from Dictyostelium discoideum (Social amoeba).